Here is a 699-residue protein sequence, read N- to C-terminus: Tectonic-like complex member Mks1 (699 aa).

Disordered stretches follow at residues 101–121 (RRSPISQHEGEMEKDKNEGEI) and 373–396 (DGFSEEADGEDEQELGDGLPIEED). Residues 108 to 119 (HEGEMEKDKNEG) show a composition bias toward basic and acidic residues. One can recognise a C2 B9-type domain in the interval 434–560 (KRVSLLLELQ…RLQCIRPLGN (127 aa)). The segment at 632-661 (LELGNDSSDDGDSNDDDVRSSSNPDTSRAT) is disordered.

In terms of assembly, probable component of the tectonic-like complex (also named MKS complex), composed of B9d1, B9d2, Cc2d2a, Mks1 and tctn. As to expression, expressed in chordotonal neurons in the antennae (at protein level). Expressed in spermatids (at protein level).

It localises to the cytoplasm. Its subcellular location is the cytoskeleton. It is found in the cilium basal body. The protein localises to the microtubule organizing center. The protein resides in the centrosome. It localises to the centriole. Probable component of the tectonic-like complex (also named MKS complex), a complex localized at the transition zone of primary cilia. Required for ciliary structure and function. The protein is Tectonic-like complex member Mks1 of Drosophila melanogaster (Fruit fly).